Reading from the N-terminus, the 302-residue chain is IALILVCWSVLSQAAQTDVEGRADKRRPIWIMGHMVNAIAQIDEFVNLGANSIETDVSFDDNANPEYTYHGVPCDCGRSCLKWENFNDFLKGLRSATTPGNAKYQAKLILVVFDLKTGSLYDNQANEAGKKLAKNLLKHYWNNGNNGGRAYIVLSIPDLNHYPLIKGFKDQLTHDGHPELMDKVGHDFSGNDAIGDVGNAYKKAGISGHVWQSDGITNCLLRGLDRVKQAIANRDSGNGFINKVYYWTVDKRATTRDALDAGVDGVMTNYPDVITDVLNESAYKNKFRVASYEDNPWETFKK.

The first 14 residues, 1-14 (IALILVCWSVLSQA), serve as a signal peptide directing secretion. A propeptide spanning residues 15-22 (AQTDVEGR) is cleaved from the precursor. Residue His-34 is part of the active site. Mg(2+)-binding residues include Glu-54 and Asp-56. The active-site Nucleophile is the His-70. Cystine bridges form between Cys-74-Cys-80 and Cys-76-Cys-219. Residue Asp-114 participates in Mg(2+) binding. The N-linked (GlcNAc...) asparagine glycan is linked to Asn-279.

Belongs to the arthropod phospholipase D family. Class II subfamily. Mg(2+) is required as a cofactor. As to expression, expressed by the venom gland.

It localises to the secreted. It catalyses the reaction an N-(acyl)-sphingosylphosphocholine = an N-(acyl)-sphingosyl-1,3-cyclic phosphate + choline. The enzyme catalyses an N-(acyl)-sphingosylphosphoethanolamine = an N-(acyl)-sphingosyl-1,3-cyclic phosphate + ethanolamine. It carries out the reaction a 1-acyl-sn-glycero-3-phosphocholine = a 1-acyl-sn-glycero-2,3-cyclic phosphate + choline. The catalysed reaction is a 1-acyl-sn-glycero-3-phosphoethanolamine = a 1-acyl-sn-glycero-2,3-cyclic phosphate + ethanolamine. Its function is as follows. Dermonecrotic toxins cleave the phosphodiester linkage between the phosphate and headgroup of certain phospholipids (sphingolipid and lysolipid substrates), forming an alcohol (often choline) and a cyclic phosphate. This toxin acts on sphingomyelin (SM). It may also act on ceramide phosphoethanolamine (CPE), lysophosphatidylcholine (LPC) and lysophosphatidylethanolamine (LPE), but not on lysophosphatidylserine (LPS), and lysophosphatidylglycerol (LPG). It acts by transphosphatidylation, releasing exclusively cyclic phosphate products as second products. Induces dermonecrosis, hemolysis, increased vascular permeability, edema, inflammatory response, and platelet aggregation. This Loxosceles intermedia (Brown spider) protein is Dermonecrotic toxin LiSicTox-alphaIA2bii.